Consider the following 238-residue polypeptide: Aspartate/glutamate leucyltransferase (238 aa).

The protein belongs to the R-transferase family. Bpt subfamily.

The protein localises to the cytoplasm. It catalyses the reaction N-terminal L-glutamyl-[protein] + L-leucyl-tRNA(Leu) = N-terminal L-leucyl-L-glutamyl-[protein] + tRNA(Leu) + H(+). The catalysed reaction is N-terminal L-aspartyl-[protein] + L-leucyl-tRNA(Leu) = N-terminal L-leucyl-L-aspartyl-[protein] + tRNA(Leu) + H(+). Functionally, functions in the N-end rule pathway of protein degradation where it conjugates Leu from its aminoacyl-tRNA to the N-termini of proteins containing an N-terminal aspartate or glutamate. This is Aspartate/glutamate leucyltransferase from Shewanella oneidensis (strain ATCC 700550 / JCM 31522 / CIP 106686 / LMG 19005 / NCIMB 14063 / MR-1).